The following is a 464-amino-acid chain: Phosphoglucosamine mutase (464 aa).

Catalysis depends on Ser112, which acts as the Phosphoserine intermediate. Mg(2+)-binding residues include Ser112, Asp252, Asp254, and Asp256. Phosphoserine is present on Ser112.

Belongs to the phosphohexose mutase family. Mg(2+) serves as cofactor. Activated by phosphorylation.

It catalyses the reaction alpha-D-glucosamine 1-phosphate = D-glucosamine 6-phosphate. In terms of biological role, catalyzes the conversion of glucosamine-6-phosphate to glucosamine-1-phosphate. The sequence is that of Phosphoglucosamine mutase from Synechococcus sp. (strain CC9902).